Reading from the N-terminus, the 115-residue chain is MKYTKQEARKRRHYRVRSKVSGTAAKPRLNVFKSNTNFYAQIIDDTTGTTLVSASSLNLGLKSGNIEAAKKVAEEIAKLAIAKSIVDVVFDRGGYLYHGKVKAFAEAARENGLKF.

A disordered region spans residues methionine 1–valine 20. The span at alanine 8 to serine 18 shows a compositional bias: basic residues.

It belongs to the universal ribosomal protein uL18 family. As to quaternary structure, part of the 50S ribosomal subunit; part of the 5S rRNA/L5/L18/L25 subcomplex. Contacts the 5S and 23S rRNAs.

This is one of the proteins that bind and probably mediate the attachment of the 5S RNA into the large ribosomal subunit, where it forms part of the central protuberance. This chain is Large ribosomal subunit protein uL18, found in Mesoplasma florum (strain ATCC 33453 / NBRC 100688 / NCTC 11704 / L1) (Acholeplasma florum).